We begin with the raw amino-acid sequence, 225 residues long: Probable polyketide biosynthesis zinc-dependent hydrolase BaeB (225 aa).

Residues His-62, His-64, Asp-66, His-67, His-123, Asp-140, and His-181 each contribute to the Zn(2+) site.

This sequence belongs to the metallo-beta-lactamase superfamily. Requires Zn(2+) as cofactor.

It localises to the cytoplasm. Its pathway is antibiotic biosynthesis; bacillaene biosynthesis. Functionally, probably involved in some intermediate steps for the synthesis of the antibiotic polyketide bacillaene which is involved in secondary metabolism. The polypeptide is Probable polyketide biosynthesis zinc-dependent hydrolase BaeB (baeB) (Bacillus velezensis (strain DSM 23117 / BGSC 10A6 / LMG 26770 / FZB42) (Bacillus amyloliquefaciens subsp. plantarum)).